Here is a 445-residue protein sequence, read N- to C-terminus: Flagellum-associated coiled-coil domain-containing protein 1 (445 aa).

The disordered stretch occupies residues 26-47 (PQLPRKNSTGSSKLTPLVPAPK). Positions 30–39 (RKNSTGSSKL) are enriched in polar residues. Coiled-coil stretches lie at residues 122–226 (SRTN…TYQD) and 283–315 (AVFENFIQEKEELLKQHQSDTLQLEELRKTKEV). Lys376 bears the N6-acetyllysine mark. A coiled-coil region spans residues 387-414 (EKYKHTIQILTEENIHLKQKIISKNEEI).

Its subcellular location is the cytoplasm. It localises to the cytoplasmic granule. The protein resides in the cell projection. It is found in the cilium. The protein localises to the flagellum. This Homo sapiens (Human) protein is Flagellum-associated coiled-coil domain-containing protein 1.